Reading from the N-terminus, the 168-residue chain is Protein SprT (168 aa).

Positions Glu-20–Ile-166 constitute a SprT-like domain. A Zn(2+)-binding site is contributed by His-78. Glu-79 is a catalytic residue. A Zn(2+)-binding site is contributed by His-82.

It belongs to the SprT family. The cofactor is Zn(2+).

It is found in the cytoplasm. The chain is Protein SprT from Proteus mirabilis (strain HI4320).